Here is a 386-residue protein sequence, read N- to C-terminus: Mannitol-1-phosphate 5-dehydrogenase (386 aa).

NAD(+) is bound at residue 3 to 14 (AVHFGAGNIGRG).

The protein belongs to the mannitol dehydrogenase family.

It carries out the reaction D-mannitol 1-phosphate + NAD(+) = beta-D-fructose 6-phosphate + NADH + H(+). This Brevibacillus brevis (strain 47 / JCM 6285 / NBRC 100599) protein is Mannitol-1-phosphate 5-dehydrogenase.